Here is a 405-residue protein sequence, read N- to C-terminus: PP2A regulatory subunit TAP46 (405 aa).

Disordered stretches follow at residues 159–189 (ERRGRSTKASALSTPVESGEDDIPDDDSEEE) and 352–405 (ATTS…TPCG). Residues 165-174 (TKASALSTPV) show a composition bias toward polar residues. 2 stretches are compositionally biased toward acidic residues: residues 176–189 (SGEDDIPDDDSEEE) and 367–377 (EDEEDDDEDEE). Over residues 378–393 (AVMKARAFDDWKDDNP) the composition is skewed to basic and acidic residues.

Belongs to the IGBP1/TAP42 family. As to quaternary structure, interacts with the 36 kDa catalytic subunit (subunit C) of PP2A. Interacts with PP2A1 and PP2A2. Interacts with PP2A3, PPX1 and FYPP1. Interacts with FYPP3 and ABI5. Interacts with ATPK1/S6K1 and ATPK2/S6K2. Interacts with TIP41L. Post-translationally, phosphorylated by TOR kinase in vitro. Ubiquitous. Highly expressed in seed, and particularly in the embryo.

In terms of biological role, involved in the positive regulation of the TOR signaling pathway. Acts as a negative regulator of PP2A catalytic activity. Plays a positive role in the ABA-regulated inhibition of germination, probably throught its interaction with ABI5. The sequence is that of PP2A regulatory subunit TAP46 from Arabidopsis thaliana (Mouse-ear cress).